Here is a 286-residue protein sequence, read N- to C-terminus: Bifunctional protein FolD (286 aa).

NADP(+) contacts are provided by residues 164 to 166, Ser-193, and Ile-234; that span reads GRS.

It belongs to the tetrahydrofolate dehydrogenase/cyclohydrolase family. As to quaternary structure, homodimer.

It carries out the reaction (6R)-5,10-methylene-5,6,7,8-tetrahydrofolate + NADP(+) = (6R)-5,10-methenyltetrahydrofolate + NADPH. The enzyme catalyses (6R)-5,10-methenyltetrahydrofolate + H2O = (6R)-10-formyltetrahydrofolate + H(+). Its pathway is one-carbon metabolism; tetrahydrofolate interconversion. In terms of biological role, catalyzes the oxidation of 5,10-methylenetetrahydrofolate to 5,10-methenyltetrahydrofolate and then the hydrolysis of 5,10-methenyltetrahydrofolate to 10-formyltetrahydrofolate. In Nitratidesulfovibrio vulgaris (strain ATCC 29579 / DSM 644 / CCUG 34227 / NCIMB 8303 / VKM B-1760 / Hildenborough) (Desulfovibrio vulgaris), this protein is Bifunctional protein FolD.